We begin with the raw amino-acid sequence, 202 residues long: Dephospho-CoA kinase (202 aa).

The region spanning 4 to 201 is the DPCK domain; that stretch reads VVALTGGIAS…QKYLAMSRQN (198 aa). Residue 12–17 coordinates ATP; that stretch reads ASGKTT.

It belongs to the CoaE family.

The protein resides in the cytoplasm. It catalyses the reaction 3'-dephospho-CoA + ATP = ADP + CoA + H(+). It participates in cofactor biosynthesis; coenzyme A biosynthesis; CoA from (R)-pantothenate: step 5/5. In terms of biological role, catalyzes the phosphorylation of the 3'-hydroxyl group of dephosphocoenzyme A to form coenzyme A. This chain is Dephospho-CoA kinase, found in Vibrio cholerae serotype O1 (strain ATCC 39315 / El Tor Inaba N16961).